The chain runs to 1105 residues: Tubulin-folding cofactor D (1105 aa).

2 N-linked (GlcNAc...) asparagine glycosylation sites follow: Asn122 and Asn126. 4 HEAT repeats span residues 308–345 (IYLEVIVDFLLSSVSDIDSFVRWSAAKGLAKIISRLPW), 347–385 (LAEQVIDAIIELMTENMFLNPIENTVNISITSPLVWHGA), 401–446 (SKCL…CYSK), and 452–489 (LQTNLILCLLQTVLFDNEINVRRAATAALFEVIGRHAS). Asn373 carries N-linked (GlcNAc...) asparagine glycosylation. N-linked (GlcNAc...) asparagine glycans are attached at residues Asn721, Asn883, and Asn1083.

Interacts with alp21.

It localises to the cytoplasm. The protein localises to the cytoskeleton. Functionally, has a function in the folding of beta-tubulin. Microtubule-associated protein that is essential to direct polarized cell growth and to position the nucleus and septum to the center of the cell during mitosis. The chain is Tubulin-folding cofactor D (alp1) from Schizosaccharomyces pombe (strain 972 / ATCC 24843) (Fission yeast).